A 374-amino-acid polypeptide reads, in one-letter code: Relaxin-3 receptor 2 (374 aa).

Residues 1–43 (MPTLNTSASPPTFFWANASGGSVLSADDAPMPVKFLALRLMVA) lie on the Extracellular side of the membrane. 2 N-linked (GlcNAc...) asparagine glycosylation sites follow: asparagine 5 and asparagine 17. The chain crosses the membrane as a helical span at residues 44–64 (LAYGLVGAIGLLGNLAVLWVL). At 65 to 78 (SNCARRAPGPPSDT) the chain is on the cytoplasmic side. A helical transmembrane segment spans residues 79-99 (FVFNLALADLGLALTLPFWAA). At 100 to 116 (ESALDFHWPFGGALCKM) the chain is on the extracellular side. A disulfide bond links cysteine 114 and cysteine 191. A helical membrane pass occupies residues 117-137 (VLTATVLNVYASIFLITALSV). Residues 138-154 (ARYWVVAMAAGPGTHLS) lie on the Cytoplasmic side of the membrane. Residues 155-175 (LFWARIATLAVWAAAALVTVP) traverse the membrane as a helical segment. The Extracellular portion of the chain corresponds to 176–209 (TAVFGVEGEVCGVRLCLLRFPSRYWLGAYQLQRV). A helical transmembrane segment spans residues 210–230 (VLAFMVPLGVITTSYLLLLAF). Over 231 to 249 (LQRRQRRRQDSRVVARSVR) the chain is Cytoplasmic. The chain crosses the membrane as a helical span at residues 250–270 (ILVASFFLCWFPNHVVTLWGV). Over 271–281 (LVKFDLVPWNS) the chain is Extracellular. The helical transmembrane segment at 282–302 (TFYTIQTYVFPVTTCLAHSNS) threads the bilayer. The Cytoplasmic portion of the chain corresponds to 303–374 (CLNPVLYCLL…LTNLDRGTPG (72 aa)).

The protein belongs to the G-protein coupled receptor 1 family. As to expression, expressed in a broader range of tissues including brain, kidney, testis, thymus, placenta, prostate, salivary gland, thyroid and colon.

It localises to the cell membrane. Functionally, high affinity receptor for INSL5. Also acts as a receptor for RLN3/relaxin-3, as well as bradykinin and kallidin. Binding of the ligand inhibit cAMP accumulation. The polypeptide is Relaxin-3 receptor 2 (RXFP4) (Homo sapiens (Human)).